Consider the following 584-residue polypeptide: Aspartate--tRNA(Asp/Asn) ligase (584 aa).

Residue Glu-177 coordinates L-aspartate. Residues 201–204 (QLFK) are aspartate. Arg-223 is an L-aspartate binding site. Residues 223 to 225 (RDE) and Gln-232 contribute to the ATP site. His-447 contributes to the L-aspartate binding site. Glu-481 contributes to the ATP binding site. Residue Arg-488 coordinates L-aspartate. 533 to 536 (GLDR) contacts ATP.

This sequence belongs to the class-II aminoacyl-tRNA synthetase family. Type 1 subfamily. In terms of assembly, homodimer.

It localises to the cytoplasm. It catalyses the reaction tRNA(Asx) + L-aspartate + ATP = L-aspartyl-tRNA(Asx) + AMP + diphosphate. Functionally, aspartyl-tRNA synthetase with relaxed tRNA specificity since it is able to aspartylate not only its cognate tRNA(Asp) but also tRNA(Asn). Reaction proceeds in two steps: L-aspartate is first activated by ATP to form Asp-AMP and then transferred to the acceptor end of tRNA(Asp/Asn). The chain is Aspartate--tRNA(Asp/Asn) ligase from Chlamydia pneumoniae (Chlamydophila pneumoniae).